The following is a 293-amino-acid chain: Ribosomal RNA small subunit methyltransferase H (293 aa).

S-adenosyl-L-methionine contacts are provided by residues 32-34, Asp51, Phe78, Asp99, and Gln106; that span reads GGH. Residues 271–293 form a disordered region; it reads PGTEEIRENPPSRSAKLRVAKRI.

This sequence belongs to the methyltransferase superfamily. RsmH family.

The protein resides in the cytoplasm. It carries out the reaction cytidine(1402) in 16S rRNA + S-adenosyl-L-methionine = N(4)-methylcytidine(1402) in 16S rRNA + S-adenosyl-L-homocysteine + H(+). Specifically methylates the N4 position of cytidine in position 1402 (C1402) of 16S rRNA. This chain is Ribosomal RNA small subunit methyltransferase H, found in Persephonella marina (strain DSM 14350 / EX-H1).